Consider the following 84-residue polypeptide: Small ribosomal subunit protein bS16 (84 aa).

The protein belongs to the bacterial ribosomal protein bS16 family.

In Dechloromonas aromatica (strain RCB), this protein is Small ribosomal subunit protein bS16.